Here is a 96-residue protein sequence, read N- to C-terminus: Small ribosomal subunit protein bS6 (96 aa).

The protein belongs to the bacterial ribosomal protein bS6 family.

Binds together with bS18 to 16S ribosomal RNA. This Bacillus cereus (strain ATCC 10987 / NRS 248) protein is Small ribosomal subunit protein bS6.